Here is a 201-residue protein sequence, read N- to C-terminus: MAHAEEPEDRMAWIEPEVRPGSLLVSSTDLTEPAFRRTVIYMIEHNDAGSLGVIVNRPSETAVQNVLPQWSPLTAHPSALYIGGPVKRDSALCLGIARNGARIDGVAGLRRVDGKVVMVDLDSDPEVIAPLVEGIRIFAGYSGWTLGQLDSELEREDWMVISSLPSDVLTPPRVDVWARVLRRQPLPVAMLASHPIEVERN.

It belongs to the UPF0301 (AlgH) family.

The protein is UPF0301 protein RER_60040 of Rhodococcus erythropolis (strain PR4 / NBRC 100887).